Here is a 486-residue protein sequence, read N- to C-terminus: Argininosuccinate lyase (486 aa).

Belongs to the lyase 1 family. Argininosuccinate lyase subfamily.

It localises to the cytoplasm. The enzyme catalyses 2-(N(omega)-L-arginino)succinate = fumarate + L-arginine. It participates in amino-acid biosynthesis; L-arginine biosynthesis; L-arginine from L-ornithine and carbamoyl phosphate: step 3/3. The chain is Argininosuccinate lyase from Acidobacterium capsulatum (strain ATCC 51196 / DSM 11244 / BCRC 80197 / JCM 7670 / NBRC 15755 / NCIMB 13165 / 161).